We begin with the raw amino-acid sequence, 245 residues long: Bis(5'-nucleosyl)-tetraphosphatase PrpE [asymmetrical] (245 aa).

The protein belongs to the PrpE family. Ni(2+) serves as cofactor.

It catalyses the reaction P(1),P(4)-bis(5'-guanosyl) tetraphosphate + H2O = GMP + GTP + 2 H(+). In terms of biological role, asymmetrically hydrolyzes Ap4p to yield AMP and ATP. This Geobacillus sp. (strain WCH70) protein is Bis(5'-nucleosyl)-tetraphosphatase PrpE [asymmetrical].